Consider the following 199-residue polypeptide: Pyridoxine/pyridoxamine 5'-phosphate oxidase (199 aa).

FMN is bound by residues 44 to 49 (RTVLLK), 59 to 60 (YT), K66, and Q91. K49 provides a ligand contact to substrate. Residues Y109, R113, and S117 each coordinate substrate. Residues 126 to 127 (QS) and W171 each bind FMN. 177 to 179 (RLH) serves as a coordination point for substrate. Residue R181 participates in FMN binding.

The protein belongs to the pyridoxamine 5'-phosphate oxidase family. Homodimer. It depends on FMN as a cofactor.

The enzyme catalyses pyridoxamine 5'-phosphate + O2 + H2O = pyridoxal 5'-phosphate + H2O2 + NH4(+). The catalysed reaction is pyridoxine 5'-phosphate + O2 = pyridoxal 5'-phosphate + H2O2. Its pathway is cofactor metabolism; pyridoxal 5'-phosphate salvage; pyridoxal 5'-phosphate from pyridoxamine 5'-phosphate: step 1/1. It functions in the pathway cofactor metabolism; pyridoxal 5'-phosphate salvage; pyridoxal 5'-phosphate from pyridoxine 5'-phosphate: step 1/1. In terms of biological role, catalyzes the oxidation of either pyridoxine 5'-phosphate (PNP) or pyridoxamine 5'-phosphate (PMP) into pyridoxal 5'-phosphate (PLP). The polypeptide is Pyridoxine/pyridoxamine 5'-phosphate oxidase (Xanthomonas euvesicatoria pv. vesicatoria (strain 85-10) (Xanthomonas campestris pv. vesicatoria)).